Reading from the N-terminus, the 129-residue chain is Large ribosomal subunit protein uL22 (129 aa).

It belongs to the universal ribosomal protein uL22 family. In terms of assembly, part of the 50S ribosomal subunit.

In terms of biological role, this protein binds specifically to 23S rRNA; its binding is stimulated by other ribosomal proteins, e.g. L4, L17, and L20. It is important during the early stages of 50S assembly. It makes multiple contacts with different domains of the 23S rRNA in the assembled 50S subunit and ribosome. Its function is as follows. The globular domain of the protein is located near the polypeptide exit tunnel on the outside of the subunit, while an extended beta-hairpin is found that lines the wall of the exit tunnel in the center of the 70S ribosome. This Phytoplasma sp. (strain STRAWB2) protein is Large ribosomal subunit protein uL22.